The following is an 883-amino-acid chain: AP-5 complex subunit beta-1 (883 aa).

In terms of assembly, probably part of the adaptor protein complex 5 (AP-5).

Functionally, as part of AP-5, a probable fifth adaptor protein complex, it may be involved in endosomal transport. This Xenopus tropicalis (Western clawed frog) protein is AP-5 complex subunit beta-1 (ap5b1).